The sequence spans 72 residues: Translation initiation factor IF-1 (72 aa).

In terms of domain architecture, S1-like spans 1-72 (MSKQTAIEQD…TKGRISFRYK (72 aa)).

This sequence belongs to the IF-1 family. Component of the 30S ribosomal translation pre-initiation complex which assembles on the 30S ribosome in the order IF-2 and IF-3, IF-1 and N-formylmethionyl-tRNA(fMet); mRNA recruitment can occur at any time during PIC assembly.

The protein resides in the cytoplasm. One of the essential components for the initiation of protein synthesis. Stabilizes the binding of IF-2 and IF-3 on the 30S subunit to which N-formylmethionyl-tRNA(fMet) subsequently binds. Helps modulate mRNA selection, yielding the 30S pre-initiation complex (PIC). Upon addition of the 50S ribosomal subunit IF-1, IF-2 and IF-3 are released leaving the mature 70S translation initiation complex. This chain is Translation initiation factor IF-1, found in Porphyromonas gingivalis (strain ATCC BAA-308 / W83).